We begin with the raw amino-acid sequence, 166 residues long: Interferon gamma (166 aa).

An N-terminal signal peptide occupies residues 1–23; sequence MNYTSFILAFQLCAILGSSTYYC. Gln-24 carries the pyrrolidone carboxylic acid modification. Residues Asn-39 and Asn-106 are each glycosylated (N-linked (GlcNAc...) asparagine). Positions 147–166 are disordered; sequence ANLRKRKRSQNPFRGRRALQ. Residues 148 to 166 are compositionally biased toward basic residues; it reads NLRKRKRSQNPFRGRRALQ.

The protein belongs to the type II (or gamma) interferon family. In terms of assembly, homodimer. Interacts with IFNGR1 (via extracellular domain); this interaction promotes IFNGR1 dimerization. Released primarily from activated T lymphocytes.

The protein resides in the secreted. In terms of biological role, type II interferon produced by immune cells such as T-cells and NK cells that plays crucial roles in antimicrobial, antiviral, and antitumor responses by activating effector immune cells and enhancing antigen presentation. Primarily signals through the JAK-STAT pathway after interaction with its receptor IFNGR1 to affect gene regulation. Upon IFNG binding, IFNGR1 intracellular domain opens out to allow association of downstream signaling components JAK2, JAK1 and STAT1, leading to STAT1 activation, nuclear translocation and transcription of IFNG-regulated genes. Many of the induced genes are transcription factors such as IRF1 that are able to further drive regulation of a next wave of transcription. Plays a role in class I antigen presentation pathway by inducing a replacement of catalytic proteasome subunits with immunoproteasome subunits. In turn, increases the quantity, quality, and repertoire of peptides for class I MHC loading. Increases the efficiency of peptide generation also by inducing the expression of activator PA28 that associates with the proteasome and alters its proteolytic cleavage preference. Up-regulates as well MHC II complexes on the cell surface by promoting expression of several key molecules such as cathepsins B/CTSB, H/CTSH, and L/CTSL. Participates in the regulation of hematopoietic stem cells during development and under homeostatic conditions by affecting their development, quiescence, and differentiation. The sequence is that of Interferon gamma (IFNG) from Equus caballus (Horse).